A 378-amino-acid chain; its full sequence is Chaperone protein DnaJ (378 aa).

In terms of domain architecture, J spans 5 to 70 (DYYEVLGVAK…QKRAAYDQYG (66 aa)). Residues 138–216 (GYDTQIRVPS…CHGSGKVKET (79 aa)) form a CR-type zinc finger. Zn(2+) is bound by residues Cys151, Cys154, Cys168, Cys171, Cys190, Cys193, Cys204, and Cys207. 4 CXXCXGXG motif repeats span residues 151 to 158 (CEVCHGSG), 168 to 175 (CPTCHGQG), 190 to 197 (CPKCHGTG), and 204 to 211 (CAHCHGSG).

It belongs to the DnaJ family. In terms of assembly, homodimer. The cofactor is Zn(2+).

The protein localises to the cytoplasm. In terms of biological role, participates actively in the response to hyperosmotic and heat shock by preventing the aggregation of stress-denatured proteins and by disaggregating proteins, also in an autonomous, DnaK-independent fashion. Unfolded proteins bind initially to DnaJ; upon interaction with the DnaJ-bound protein, DnaK hydrolyzes its bound ATP, resulting in the formation of a stable complex. GrpE releases ADP from DnaK; ATP binding to DnaK triggers the release of the substrate protein, thus completing the reaction cycle. Several rounds of ATP-dependent interactions between DnaJ, DnaK and GrpE are required for fully efficient folding. Also involved, together with DnaK and GrpE, in the DNA replication of plasmids through activation of initiation proteins. The sequence is that of Chaperone protein DnaJ from Burkholderia cenocepacia (strain HI2424).